We begin with the raw amino-acid sequence, 359 residues long: Probable NAD(P)H nitroreductase PigM (359 aa).

It belongs to the nitroreductase family. FMN is required as a cofactor.

It participates in antibiotic biosynthesis; prodigiosin biosynthesis. In terms of biological role, involved in the biosynthesis of 4-methoxy-2,2'-bipyrrole-5-carbaldehyde (MBC), one of the terminal products involved in the biosynthesis of the red antibiotic prodigiosin (Pig). Catalyzes the oxidation of the hydroxy group of 4-hydroxy-2,2'-bipyrrole-5-methanol (HBM) to yield 4-methoxy-2,2'-bipyrrole-5-carbaldehyde (MBC). The protein is Probable NAD(P)H nitroreductase PigM of Serratia sp. (strain ATCC 39006) (Prodigiosinella confusarubida).